The primary structure comprises 138 residues: Small ribosomal subunit protein uS11c (138 aa).

Residues 1 to 23 form a disordered region; that stretch reads MAKPILRIGSRKNTRSGSRKNVR. A compositionally biased stretch (basic residues) spans 9–23; it reads GSRKNTRSGSRKNVR.

It belongs to the universal ribosomal protein uS11 family. In terms of assembly, part of the 30S ribosomal subunit.

It localises to the plastid. The protein resides in the chloroplast. The polypeptide is Small ribosomal subunit protein uS11c (Crucihimalaya wallichii (Rock-cress)).